The following is a 98-amino-acid chain: UPF0235 protein MJ0618 (98 aa).

Belongs to the UPF0235 family.

The sequence is that of UPF0235 protein MJ0618 from Methanocaldococcus jannaschii (strain ATCC 43067 / DSM 2661 / JAL-1 / JCM 10045 / NBRC 100440) (Methanococcus jannaschii).